Reading from the N-terminus, the 258-residue chain is Apolipoprotein A-I (258 aa).

The first 18 residues, 1-18, serve as a signal peptide directing secretion; sequence MKFLVLALTILLAAGTQA. Positions 32–63 are 3 X approximate tandem repeats; sequence VKAALNMYIAQVKLTAQRSIDLLDDTEYKEYK. 2 consecutive repeat copies span residues 64–85 and 86–106. Residues 64–258 form a 10 X approximate tandem repeats region; that stretch reads MQLSQSLDNL…WLSTRPSARP (195 aa). One copy of the 3; half-length repeat lies at 107-117; that stretch reads KDVEDVRTQLE. A run of 7 repeats spans residues 118–139, 140–161, 162–183, 184–205, 206–227, 228–238, and 239–258. Residues 233 to 258 form a disordered region; it reads FKARWAPPPRRPSKSSWLSTRPSARP. Residues 246–258 are compositionally biased toward polar residues; it reads KSSWLSTRPSARP.

Belongs to the apolipoprotein A1/A4/E family. In terms of tissue distribution, major protein of plasma HDL, also found in chylomicrons. Expressed in liver, intestine and muscle.

Its subcellular location is the secreted. In terms of biological role, participates in the reverse transport of cholesterol from tissues to the liver for excretion by promoting cholesterol efflux from tissues and by acting as a cofactor for the lecithin cholesterol acyltransferase (LCAT). The chain is Apolipoprotein A-I (apoa1) from Salmo salar (Atlantic salmon).